The following is a 798-amino-acid chain: Acetamidase regulatory protein (798 aa).

A DNA-binding region (zn(2)-C6 fungal-type) is located at residues cysteine 20–cysteine 50. Disordered stretches follow at residues valine 68–alanine 96, alanine 115–alanine 172, and leucine 632–alanine 714. 2 stretches are compositionally biased toward low complexity: residues lysine 82–proline 94 and threonine 133–asparagine 147. The span at leucine 632–arginine 641 shows a compositional bias: basic and acidic residues. The segment covering serine 644 to glycine 663 has biased composition (polar residues). A compositionally biased stretch (pro residues) spans proline 678–glutamine 687.

Its subcellular location is the nucleus. Functionally, positively regulates the expression of 5 genes involved in the catabolism of certain amides (amdS), omega amino acids (gatA and gabA), and lactams (lamA and lamB) in the presence of omega amino acid inducers. This chain is Acetamidase regulatory protein (amdR), found in Emericella nidulans (strain FGSC A4 / ATCC 38163 / CBS 112.46 / NRRL 194 / M139) (Aspergillus nidulans).